Consider the following 253-residue polypeptide: Triosephosphate isomerase (253 aa).

Residue 9 to 11 (NWK) participates in substrate binding. H97 functions as the Electrophile in the catalytic mechanism. E169 functions as the Proton acceptor in the catalytic mechanism. Substrate contacts are provided by residues G175, S215, and 236 to 237 (GG).

This sequence belongs to the triosephosphate isomerase family. In terms of assembly, homodimer.

Its subcellular location is the cytoplasm. It catalyses the reaction D-glyceraldehyde 3-phosphate = dihydroxyacetone phosphate. The protein operates within carbohydrate biosynthesis; gluconeogenesis. It functions in the pathway carbohydrate degradation; glycolysis; D-glyceraldehyde 3-phosphate from glycerone phosphate: step 1/1. Involved in the gluconeogenesis. Catalyzes stereospecifically the conversion of dihydroxyacetone phosphate (DHAP) to D-glyceraldehyde-3-phosphate (G3P). In Staphylococcus saprophyticus subsp. saprophyticus (strain ATCC 15305 / DSM 20229 / NCIMB 8711 / NCTC 7292 / S-41), this protein is Triosephosphate isomerase.